Here is a 284-residue protein sequence, read N- to C-terminus: Sulfotransferase 2A6 (284 aa).

Residue 43–48 (KSGTNW) coordinates 3'-phosphoadenylyl sulfate. H98 acts as the Proton acceptor in catalysis. 3'-phosphoadenylyl sulfate is bound by residues R120, S128, Y183, 217 to 222 (SSFQVM), and 246 to 248 (RNG).

This sequence belongs to the sulfotransferase 1 family. As to quaternary structure, oligomer. As to expression, liver, exhibiting a sex-dependent spatial localization in the lobule of the liver.

It is found in the cytoplasm. It localises to the cytosol. The catalysed reaction is an alcohol + 3'-phosphoadenylyl sulfate = an alkyl sulfate + adenosine 3',5'-bisphosphate + H(+). It carries out the reaction glycolithocholate + 3'-phosphoadenylyl sulfate = sulfoglycolithocholate + adenosine 3',5'-bisphosphate + H(+). It catalyses the reaction taurolithocholate + 3'-phosphoadenylyl sulfate = taurolithocholate 3-sulfate + adenosine 3',5'-bisphosphate + H(+). The enzyme catalyses 3beta-hydroxyandrost-5-en-17-one + 3'-phosphoadenylyl sulfate = dehydroepiandrosterone 3-sulfate + adenosine 3',5'-bisphosphate + H(+). The catalysed reaction is 3beta-hydroxy-5-cholenate + 3'-phosphoadenylyl sulfate = 3beta-sulfo-5-cholenate + adenosine 3',5'-bisphosphate + H(+). It carries out the reaction deoxycholate + 3'-phosphoadenylyl sulfate = 3alpha-sulfodeoxycholate + adenosine 3',5'-bisphosphate + H(+). It catalyses the reaction glycodeoxycholate + 3'-phosphoadenylyl sulfate = 3alpha-sulfoglycodeoxycholate + adenosine 3',5'-bisphosphate + H(+). The enzyme catalyses taurodeoxycholate + 3'-phosphoadenylyl sulfate = 3alpha-sulfotaurodeoxycholate + adenosine 3',5'-bisphosphate + H(+). In terms of biological role, sulfotransferase that utilizes 3'-phospho-5'-adenylyl sulfate (PAPS) as sulfonate donor to catalyze the sulfonation of the hydroxyl group of hydroxysteroids and bile acids. Prefered substrates are dehydroepiandrosterone (DHEA, also known as 3beta-hydroxyandrost-5-en-17-one) and 3beta-hydroxy-5-cholenoate, but can also catalyze deoxycholate and its conjugates, and lithocholate conjugates, in vitro. In Rattus norvegicus (Rat), this protein is Sulfotransferase 2A6.